Here is a 162-residue protein sequence, read N- to C-terminus: Phospholipase A and acyltransferase 3 (162 aa).

The Cytoplasmic segment spans residues 1-133 (MRAPIPEPKP…VARSDQVRDV (133 aa)). Positions 13–129 (LIEIFRPFYR…LRYGVARSDQ (117 aa)) constitute an LRAT domain. Residues His-23 and His-35 contribute to the active site. The active-site Acyl-thioester intermediate is the Cys-113. A helical membrane pass occupies residues 134-154 (IIAASVAGMGLAAMSLIGVMF). Residues 155–162 (SRNKRQKQ) lie on the Lumenal side of the membrane.

This sequence belongs to the H-rev107 family. In terms of assembly, interacts with PPP2R1A; this interaction might decrease PP2A activity. As to expression, widely expressed. Low expression, if any, in hematopoietic cells and thymus. In testis, confined to round spermatids. Expressed in normal ovarian epithelial cells. Down-regulated in some ovarian carcinomas and testicular germ cell tumors. Highly expressed in white adipose tissue.

The protein localises to the cell membrane. It is found in the cytoplasm. Its subcellular location is the cytosol. It localises to the perinuclear region. The protein resides in the peroxisome membrane. The protein localises to the mitochondrion membrane. It is found in the nucleus envelope. Its subcellular location is the lysosome membrane. It localises to the endoplasmic reticulum membrane. It catalyses the reaction a 1,2-diacyl-sn-glycero-3-phosphocholine + H2O = a 1-acyl-sn-glycero-3-phosphocholine + a fatty acid + H(+). It carries out the reaction a 1,2-diacyl-sn-glycero-3-phosphocholine + H2O = a 2-acyl-sn-glycero-3-phosphocholine + a fatty acid + H(+). The enzyme catalyses 1,2-dihexadecanoyl-sn-glycero-3-phosphocholine + H2O = 1-hexadecanoyl-sn-glycero-3-phosphocholine + hexadecanoate + H(+). The catalysed reaction is 1,2-dihexadecanoyl-sn-glycero-3-phosphocholine + H2O = 2-hexadecanoyl-sn-glycero-3-phosphocholine + hexadecanoate + H(+). It catalyses the reaction 1-hexadecanoyl-2-(9Z-octadecenoyl)-sn-glycero-3-phosphocholine + H2O = 2-(9Z-octadecenoyl)-sn-glycero-3-phosphocholine + hexadecanoate + H(+). It carries out the reaction 1-hexadecanoyl-2-(9Z-octadecenoyl)-sn-glycero-3-phosphocholine + H2O = 1-hexadecanoyl-sn-glycero-3-phosphocholine + (9Z)-octadecenoate + H(+). The enzyme catalyses 1-hexadecanoyl-2-(5Z,8Z,11Z,14Z-eicosatetraenoyl)-sn-glycero-3-phosphocholine + H2O = 1-hexadecanoyl-sn-glycero-3-phosphocholine + (5Z,8Z,11Z,14Z)-eicosatetraenoate + H(+). The catalysed reaction is 1-hexadecanoyl-2-(5Z,8Z,11Z,14Z-eicosatetraenoyl)-sn-glycero-3-phosphocholine + H2O = 2-(5Z,8Z,11Z,14Z)-eicosatetraenoyl-sn-glycero-3-phosphocholine + hexadecanoate + H(+). It catalyses the reaction 1-hexadecanoyl-2-(9Z,12Z-octadecadienoyl)-sn-glycero-3-phosphoethanolamine + H2O = 1-hexadecanoyl-sn-glycero-3-phosphoethanolamine + (9Z,12Z)-octadecadienoate + H(+). It carries out the reaction 1-hexadecanoyl-2-(9Z,12Z-octadecadienoyl)-sn-glycero-3-phosphoethanolamine + H2O = 2-(9Z,12Z)-octadecadienoyl-sn-glycero-3-phosphoethanolamine + hexadecanoate + H(+). The enzyme catalyses 1-hexadecanoyl-2-(5Z,8Z,11Z,14Z-eicosatetraenoyl)-sn-glycero-3-phosphoethanolamine + H2O = 1-hexadecanoyl-sn-glycero-3-phosphoethanolamine + (5Z,8Z,11Z,14Z)-eicosatetraenoate + H(+). The catalysed reaction is 1-hexadecanoyl-2-(5Z,8Z,11Z,14Z-eicosatetraenoyl)-sn-glycero-3-phosphoethanolamine + H2O = 2-(5Z,8Z,11Z,14Z)-eicosatetraenoyl-sn-glycero-3-phosphoethanolamine + hexadecanoate + H(+). It catalyses the reaction 1-hexanoyl-2-acyl-sn-glycero-3-phosphocholine + H2O = hexanoate + a 2-acyl-sn-glycero-3-phosphocholine + H(+). It carries out the reaction 1-hexanoyl-2-acyl-sn-glycero-3-phosphocholine + H2O = 1-hexanoyl-sn-glycero-3-phosphocholine + a fatty acid + H(+). The enzyme catalyses 1,2-diheptadecanoyl-sn-glycero-3-phosphoethanolamine + 1-(9Z-octadecenoyl)-2-hexadecanoyl-sn-glycero-3-phosphocholine = 1,2-diheptadecanoyl-sn-glycero-3-phospho-N-hexadecanoyl-ethanolamine + 1-(9Z-octadecenoyl)-sn-glycero-3-phosphocholine + H(+). The catalysed reaction is 1,2-diheptadecanoyl-sn-glycero-3-phosphoethanolamine + 1-(9Z-octadecenoyl)-2-hexadecanoyl-sn-glycero-3-phosphocholine = 1,2-diheptadecanoyl-sn-glycero-3-phospho-N-(9Z-octadecenoyl)-ethanolamine + 2-hexadecanoyl-sn-glycero-3-phosphocholine + H(+). It catalyses the reaction 1,2-dihexanoyl-sn-glycero-3-phosphoethanolamine + 2-heptanoyl-sn-glycero-3-phosphocholine = hexanoyl-sn-glycero-3-phosphoethanolamine + 1-hexanoyl-2-heptanoyl-sn-glycero-3-phosphocholine. It carries out the reaction 1-hexadecanoyl-2-octadecanoyl-sn-glycero-3-phosphocholine + H2O = octadecanoate + 1-hexadecanoyl-sn-glycero-3-phosphocholine + H(+). The enzyme catalyses 1-hexadecanoyl-2-octadecanoyl-sn-glycero-3-phosphocholine + H2O = 2-octadecanoyl-sn-glycero-3-phosphocholine + hexadecanoate + H(+). The catalysed reaction is 1-octadecanoyl-2-hexadecanoyl-sn-glycero-3-phosphocholine + H2O = 1-octadecanoyl-sn-glycero-3-phosphocholine + hexadecanoate + H(+). It catalyses the reaction 1-octadecanoyl-2-hexadecanoyl-sn-glycero-3-phosphocholine + H2O = 2-hexadecanoyl-sn-glycero-3-phosphocholine + octadecanoate + H(+). It carries out the reaction 1-hexadecanoyl-2-(9Z,12Z-octadecadienoyl)-sn-glycero-3-phosphocholine + H2O = (9Z,12Z)-octadecadienoate + 1-hexadecanoyl-sn-glycero-3-phosphocholine + H(+). The enzyme catalyses 1-hexadecanoyl-2-(9Z,12Z-octadecadienoyl)-sn-glycero-3-phosphocholine + H2O = 2-(9Z,12Z-octadecadienoyl)-sn-glycero-3-phosphocholine + hexadecanoate + H(+). The catalysed reaction is 1,2-di-(9Z-octadecenoyl)-sn-glycero-3-phosphocholine + H2O = 2-(9Z-octadecenoyl)-sn-glycero-3-phosphocholine + (9Z)-octadecenoate + H(+). It catalyses the reaction 1,2-dihexadecanoyl-sn-glycero-3-phosphocholine + H2O = hexadecanoyl-sn-glycero-3-phosphocholine + hexadecanoate + H(+). It carries out the reaction 1,2-di-(9Z-octadecenoyl)-sn-glycero-3-phosphocholine + H2O = 1-(9Z-octadecenoyl)-sn-glycero-3-phosphocholine + (9Z)-octadecenoate + H(+). The enzyme catalyses 1,2-di-(9Z-octadecenoyl)-sn-glycero-3-phosphoethanolamine + 1,2-dihexadecanoyl-sn-glycero-3-phosphocholine = hexadecanoyl-sn-glycero-3-phosphocholine + N-hexadecanoyl-1,2-di-(9Z-octadecenoyl)-sn-glycero-3-phosphoethanolamine + H(+). The catalysed reaction is 1,2-di-(9Z,12Z-octadecadienoyl)-sn-glycero-3-phosphocholine + H2O = 1-(9Z,12Z)-octadecadienoyl-sn-glycero-3-phosphocholine + (9Z,12Z)-octadecadienoate + H(+). In terms of biological role, exhibits both phospholipase A1/2 and acyltransferase activities. Shows phospholipase A1 (PLA1) and A2 (PLA2) activity, catalyzing the calcium-independent release of fatty acids from the sn-1 or sn-2 position of glycerophospholipids. For most substrates, PLA1 activity is much higher than PLA2 activity. Shows O-acyltransferase activity,catalyzing the transfer of a fatty acyl group from glycerophospholipid to the hydroxyl group of lysophospholipid. Shows N-acyltransferase activity, catalyzing the calcium-independent transfer of a fatty acyl group at the sn-1 position of phosphatidylcholine (PC) and other glycerophospholipids to the primary amine of phosphatidylethanolamine (PE), forming N-acylphosphatidylethanolamine (NAPE), which serves as precursor for N-acylethanolamines (NAEs). Exhibits high N-acyltransferase activity and low phospholipase A1/2 activity. Required for complete organelle rupture and degradation that occur during eye lens terminal differentiation, when fiber cells that compose the lens degrade all membrane-bound organelles in order to provide lens with transparency to allow the passage of light. Organelle membrane degradation is probably catalyzed by the phospholipase activity. Its function is as follows. (Microbial infection) Acts as a host factor for picornaviruses: required during early infection to promote viral genome release into the cytoplasm. May act as a cellular sensor of membrane damage at sites of virus entry, which relocalizes to sites of membrane rupture upon virus unfection. Facilitates safe passage of the RNA away from LGALS8, enabling viral genome translation by host ribosome. May also be involved in initiating pore formation, increasing pore size or in maintaining pores for genome delivery. The lipid-modifying enzyme activity is required for this process. In Homo sapiens (Human), this protein is Phospholipase A and acyltransferase 3.